A 42-amino-acid polypeptide reads, in one-letter code: Small, acid-soluble spore protein L (42 aa).

The tract at residues 1–42 is disordered; sequence MKKKDKGRLTGGVTPQGDLEGNTHNDPKTELEERAKKSNTKR. Residues 21–36 show a composition bias toward basic and acidic residues; it reads GNTHNDPKTELEERAK.

The protein localises to the spore core. The chain is Small, acid-soluble spore protein L (sspL) from Bacillus subtilis (strain 168).